We begin with the raw amino-acid sequence, 332 residues long: Glycerol-3-phosphate dehydrogenase [NAD(P)+] (332 aa).

NADPH is bound by residues tryptophan 13, arginine 33, and lysine 105. Residues lysine 105, glycine 134, and serine 136 each coordinate sn-glycerol 3-phosphate. Residue alanine 138 participates in NADPH binding. Lysine 189, aspartate 242, serine 252, arginine 253, and asparagine 254 together coordinate sn-glycerol 3-phosphate. The Proton acceptor role is filled by lysine 189. Position 253 (arginine 253) interacts with NADPH. Glutamate 279 provides a ligand contact to NADPH.

It belongs to the NAD-dependent glycerol-3-phosphate dehydrogenase family.

It localises to the cytoplasm. The catalysed reaction is sn-glycerol 3-phosphate + NAD(+) = dihydroxyacetone phosphate + NADH + H(+). It catalyses the reaction sn-glycerol 3-phosphate + NADP(+) = dihydroxyacetone phosphate + NADPH + H(+). Its pathway is membrane lipid metabolism; glycerophospholipid metabolism. Catalyzes the reduction of the glycolytic intermediate dihydroxyacetone phosphate (DHAP) to sn-glycerol 3-phosphate (G3P), the key precursor for phospholipid synthesis. The chain is Glycerol-3-phosphate dehydrogenase [NAD(P)+] from Halorhodospira halophila (strain DSM 244 / SL1) (Ectothiorhodospira halophila (strain DSM 244 / SL1)).